Reading from the N-terminus, the 295-residue chain is Tyrosine transport system permease protein (295 aa).

8 helical membrane passes run 3-23 (GIIS…GVYI), 57-77 (VVAT…TGIL), 81-101 (FKIS…SINL), 122-142 (ISPI…LDLF), 173-193 (ILGL…MAQF), 200-220 (NMGI…ITLF), 232-252 (IIVG…LGML), and 256-276 (LKLI…LNIS).

This sequence belongs to the binding-protein-dependent transport system permease family. As to quaternary structure, the complex is probably composed of two ATP-binding proteins (CDR20291_0806), two transmembrane proteins (CDR20291_0807) and a solute-binding protein (CDR20291_0805).

It is found in the cell membrane. Its function is as follows. Probably part of an ABC transporter complex involved in tyrosine uptake. May also import phenylalanine. Probably responsible for the translocation of the substrate across the membrane. This chain is Tyrosine transport system permease protein, found in Clostridioides difficile (strain R20291) (Peptoclostridium difficile).